The primary structure comprises 183 residues: Ribosome rescue factor SmrB (183 aa).

The Smr domain maps to 98 to 173 (LDLHGLTQLQ…GDAALLVLIE (76 aa)).

It belongs to the SmrB family. Associates with collided ribosomes, but not with correctly translating polysomes.

Acts as a ribosome collision sensor. Detects stalled/collided disomes (pairs of ribosomes where the leading ribosome is stalled and a second ribosome has collided with it) and endonucleolytically cleaves mRNA at the 5' boundary of the stalled ribosome. Stalled/collided disomes form a new interface (primarily via the 30S subunits) that binds SmrB. Cleaved mRNA becomes available for tmRNA ligation, leading to ribosomal subunit dissociation and rescue of stalled ribosomes. The polypeptide is Ribosome rescue factor SmrB (Salmonella paratyphi A (strain ATCC 9150 / SARB42)).